The sequence spans 548 residues: Chaperonin GroEL (548 aa).

ATP contacts are provided by residues Thr29–Pro32, Lys50, Asp86–Thr90, Gly414, Asn478–Ala480, and Asp494.

Belongs to the chaperonin (HSP60) family. Forms a cylinder of 14 subunits composed of two heptameric rings stacked back-to-back. Interacts with the co-chaperonin GroES.

Its subcellular location is the cytoplasm. It catalyses the reaction ATP + H2O + a folded polypeptide = ADP + phosphate + an unfolded polypeptide.. Functionally, together with its co-chaperonin GroES, plays an essential role in assisting protein folding. The GroEL-GroES system forms a nano-cage that allows encapsulation of the non-native substrate proteins and provides a physical environment optimized to promote and accelerate protein folding. This chain is Chaperonin GroEL, found in Legionella pneumophila (strain Corby).